A 314-amino-acid chain; its full sequence is DNA-directed RNA polymerase subunit alpha (314 aa).

The interval 1–228 (MIEFEKPNIH…DHLSIFVNLT (228 aa)) is alpha N-terminal domain (alpha-NTD). The segment at 245 to 314 (KEKMLEMTIE…DLGLSLRKED (70 aa)) is alpha C-terminal domain (alpha-CTD).

It belongs to the RNA polymerase alpha chain family. Homodimer. The RNAP catalytic core consists of 2 alpha, 1 beta, 1 beta' and 1 omega subunit. When a sigma factor is associated with the core the holoenzyme is formed, which can initiate transcription.

The catalysed reaction is RNA(n) + a ribonucleoside 5'-triphosphate = RNA(n+1) + diphosphate. DNA-dependent RNA polymerase catalyzes the transcription of DNA into RNA using the four ribonucleoside triphosphates as substrates. The chain is DNA-directed RNA polymerase subunit alpha from Lactiplantibacillus plantarum (strain ATCC BAA-793 / NCIMB 8826 / WCFS1) (Lactobacillus plantarum).